The following is a 53-amino-acid chain: uncharacterized protein (53 aa).

This is an uncharacterized protein from Saccharomyces cerevisiae (strain ATCC 204508 / S288c) (Baker's yeast).